Consider the following 606-residue polypeptide: Urocanate reductase (606 aa).

Positions 1–40 (MSNLSRRNFITGGAIAALGGTLAIAGCAPKGESSSTVAGA) form a signal peptide, tat-type signal. At Thr-111 the chain carries FMN phosphoryl threonine. FAD contacts are provided by Ala-163, Glu-182, Thr-191, Gly-195, Gly-196, Ala-197, Ala-305, and Asp-373. Residue Arg-433 is the Proton donor of the active site. FAD-binding residues include Glu-572 and Ile-588.

This sequence belongs to the FAD-dependent oxidoreductase 2 family. FRD/SDH subfamily. FAD is required as a cofactor. It depends on FMN as a cofactor. Post-translationally, predicted to be exported by the Tat system. The position of the signal peptide cleavage has not been experimentally proven.

It carries out the reaction dihydrourocanate + A = urocanate + AH2. In terms of biological role, catalyzes the two-electron reduction of urocanate to dihydrourocanate (also named imidazole propionate or deamino-histidine). Dihydrourocanate is present at higher concentrations in subjects with type 2 diabetes, and directly impairs glucose tolerance and insulin signaling at the level of insulin receptor substrate (IRS) through activation of p38 gamma (MAPK12)-p62-mTORC1. Therefore, the UrdA enzyme from the gut bacteria E.lenta strain DSM 2243 may contribute to the pathogenesis of type 2 diabetes by producing the microbial metabolite dihydrourocanate. The polypeptide is Urocanate reductase (Eggerthella lenta (strain ATCC 25559 / DSM 2243 / CCUG 17323 / JCM 9979 / KCTC 3265 / NCTC 11813 / VPI 0255 / 1899 B) (Eubacterium lentum)).